The chain runs to 228 residues: MKPIIFCDFDGTITETDNIFSLMTEFVPQESEKIAKAMMEQTISFKDGLSAMFHLLSTEQKDEVIQYLMDTAVIREGFEDFVRYAQNHDIPFYIVSGGVDFFIEPLVEKYGPFSGIYCNKADFSGEQIKLIYSNSCDEECAKYSTQGCGCCKPSVMRKVAKEEHFKIVIGDSLSDFEAAKQADIVLARDHLIQRCEELHVSYKPFITFHDCLKIVQELMETNHAVPTT.

It belongs to the HAD-like hydrolase superfamily. MtnX family.

It catalyses the reaction 2-hydroxy-5-methylsulfanyl-3-oxopent-1-enyl phosphate + H2O = 1,2-dihydroxy-5-(methylsulfanyl)pent-1-en-3-one + phosphate. The protein operates within amino-acid biosynthesis; L-methionine biosynthesis via salvage pathway; L-methionine from S-methyl-5-thio-alpha-D-ribose 1-phosphate: step 4/6. Its function is as follows. Dephosphorylates 2-hydroxy-3-keto-5-methylthiopentenyl-1-phosphate (HK-MTPenyl-1-P) yielding 1,2-dihydroxy-3-keto-5-methylthiopentene (DHK-MTPene). The chain is 2-hydroxy-3-keto-5-methylthiopentenyl-1-phosphate phosphatase from Lysinibacillus sphaericus (strain C3-41).